The primary structure comprises 150 residues: D-aminoacyl-tRNA deacylase (150 aa).

The Gly-cisPro motif, important for rejection of L-amino acids motif lies at 136–137; the sequence is GP.

This sequence belongs to the DTD family. Homodimer.

It localises to the cytoplasm. The catalysed reaction is glycyl-tRNA(Ala) + H2O = tRNA(Ala) + glycine + H(+). It catalyses the reaction a D-aminoacyl-tRNA + H2O = a tRNA + a D-alpha-amino acid + H(+). Its function is as follows. An aminoacyl-tRNA editing enzyme that deacylates mischarged D-aminoacyl-tRNAs. Also deacylates mischarged glycyl-tRNA(Ala), protecting cells against glycine mischarging by AlaRS. Acts via tRNA-based rather than protein-based catalysis; rejects L-amino acids rather than detecting D-amino acids in the active site. By recycling D-aminoacyl-tRNA to D-amino acids and free tRNA molecules, this enzyme counteracts the toxicity associated with the formation of D-aminoacyl-tRNA entities in vivo and helps enforce protein L-homochirality. In Staphylococcus aureus (strain Mu50 / ATCC 700699), this protein is D-aminoacyl-tRNA deacylase.